Reading from the N-terminus, the 156-residue chain is Transcription antitermination protein NusB (156 aa).

This sequence belongs to the NusB family.

In terms of biological role, involved in transcription antitermination. Required for transcription of ribosomal RNA (rRNA) genes. Binds specifically to the boxA antiterminator sequence of the ribosomal RNA (rrn) operons. In Rickettsia rickettsii (strain Iowa), this protein is Transcription antitermination protein NusB.